The chain runs to 288 residues: Small ribosomal subunit protein uS9m (288 aa).

A disordered region spans residues 269 to 288 (VERKKPGKKKARKMPTWVKR).

This sequence belongs to the universal ribosomal protein uS9 family.

It localises to the mitochondrion. The sequence is that of Small ribosomal subunit protein uS9m (MRPS9) from Candida glabrata (strain ATCC 2001 / BCRC 20586 / JCM 3761 / NBRC 0622 / NRRL Y-65 / CBS 138) (Yeast).